The following is an 81-amino-acid chain: MGGISIWQLLIVALIVILLFGTKKLRSLGGDLGGAVKGFKNAMTPEDENKSLDDKEKDQTAATSQQAAEKQPETESKDKQA.

The helical transmembrane segment at 1–21 (MGGISIWQLLIVALIVILLFG) threads the bilayer. Residues 34 to 81 (GAVKGFKNAMTPEDENKSLDDKEKDQTAATSQQAAEKQPETESKDKQA) form a disordered region. 2 stretches are compositionally biased toward basic and acidic residues: residues 47-59 (DENK…EKDQ) and 70-81 (KQPETESKDKQA).

The protein belongs to the TatA/E family. As to quaternary structure, the Tat system comprises two distinct complexes: a TatABC complex, containing multiple copies of TatA, TatB and TatC subunits, and a separate TatA complex, containing only TatA subunits. Substrates initially bind to the TatABC complex, which probably triggers association of the separate TatA complex to form the active translocon.

Its subcellular location is the cell inner membrane. In terms of biological role, part of the twin-arginine translocation (Tat) system that transports large folded proteins containing a characteristic twin-arginine motif in their signal peptide across membranes. TatA could form the protein-conducting channel of the Tat system. The protein is Sec-independent protein translocase protein TatA of Shewanella frigidimarina (strain NCIMB 400).